A 155-amino-acid polypeptide reads, in one-letter code: Small ribosomal subunit protein uS7c (155 aa).

This sequence belongs to the universal ribosomal protein uS7 family. In terms of assembly, part of the 30S ribosomal subunit.

It is found in the plastid. Its subcellular location is the chloroplast. Functionally, one of the primary rRNA binding proteins, it binds directly to 16S rRNA where it nucleates assembly of the head domain of the 30S subunit. This Lactoris fernandeziana protein is Small ribosomal subunit protein uS7c (rps7).